The chain runs to 317 residues: ADP-L-glycero-D-manno-heptose-6-epimerase (317 aa).

Residues 10-11, 31-32, K38, K53, 76-80, and N93 contribute to the NADP(+) site; these read FI, DD, and QGACS. Y140 acts as the Proton acceptor in catalysis. Position 144 (K144) interacts with NADP(+). N169 serves as a coordination point for substrate. Positions 170 and 178 each coordinate NADP(+). The active-site Proton acceptor is the K178. Substrate-binding positions include A180, H187, 201 to 204, R214, and Y278; that span reads FEGC.

This sequence belongs to the NAD(P)-dependent epimerase/dehydratase family. HldD subfamily. As to quaternary structure, homopentamer. It depends on NADP(+) as a cofactor.

The catalysed reaction is ADP-D-glycero-beta-D-manno-heptose = ADP-L-glycero-beta-D-manno-heptose. It functions in the pathway nucleotide-sugar biosynthesis; ADP-L-glycero-beta-D-manno-heptose biosynthesis; ADP-L-glycero-beta-D-manno-heptose from D-glycero-beta-D-manno-heptose 7-phosphate: step 4/4. Catalyzes the interconversion between ADP-D-glycero-beta-D-manno-heptose and ADP-L-glycero-beta-D-manno-heptose via an epimerization at carbon 6 of the heptose. The polypeptide is ADP-L-glycero-D-manno-heptose-6-epimerase (Nitrosococcus oceani (strain ATCC 19707 / BCRC 17464 / JCM 30415 / NCIMB 11848 / C-107)).